The sequence spans 250 residues: Adapter protein MecA (250 aa).

It belongs to the MecA family. Homodimer.

Its function is as follows. Enables the recognition and targeting of unfolded and aggregated proteins to the ClpC protease or to other proteins involved in proteolysis. This Streptococcus sanguinis (strain SK36) protein is Adapter protein MecA.